The chain runs to 270 residues: 3-methyl-2-oxobutanoate hydroxymethyltransferase (270 aa).

Residues Asp-50 and Asp-89 each coordinate Mg(2+). 3-methyl-2-oxobutanoate contacts are provided by residues 50 to 51 (DS), Asp-89, and Lys-118. Glu-120 provides a ligand contact to Mg(2+). Catalysis depends on Glu-187, which acts as the Proton acceptor.

This sequence belongs to the PanB family. Homodecamer; pentamer of dimers. Mg(2+) serves as cofactor.

It localises to the cytoplasm. It catalyses the reaction 3-methyl-2-oxobutanoate + (6R)-5,10-methylene-5,6,7,8-tetrahydrofolate + H2O = 2-dehydropantoate + (6S)-5,6,7,8-tetrahydrofolate. The protein operates within cofactor biosynthesis; (R)-pantothenate biosynthesis; (R)-pantoate from 3-methyl-2-oxobutanoate: step 1/2. In terms of biological role, catalyzes the reversible reaction in which hydroxymethyl group from 5,10-methylenetetrahydrofolate is transferred onto alpha-ketoisovalerate to form ketopantoate. The sequence is that of 3-methyl-2-oxobutanoate hydroxymethyltransferase from Helicobacter pylori (strain P12).